The following is a 279-amino-acid chain: High choriolytic enzyme 2 (279 aa).

The first 20 residues, 1–20 (MNLASSACLLLLFLLGIAQA), serve as a signal peptide directing secretion. The propeptide at 21–79 (LPVQNEEGHEEGNKEGHGEEGVEEGDEDDFVDFTTRILTSNNNTDQLLLEGDLVAPTNR) is activation peptide. The segment covering 26 to 40 (EEGHEEGNKEGHGEE) has biased composition (basic and acidic residues). Residues 26–46 (EEGHEEGNKEGHGEEGVEEGD) form a disordered region. A glycan (N-linked (GlcNAc...) asparagine) is linked at asparagine 62. A Peptidase M12A domain is found at 80-279 (NAMKCWYNSC…TRSNVLYNCR (200 aa)). 3 disulfide bridges follow: cysteine 84–cysteine 89, cysteine 129–cysteine 278, and cysteine 150–cysteine 170. Histidine 178 contributes to the Zn(2+) binding site. Glutamate 179 is an active-site residue. 2 residues coordinate Zn(2+): histidine 182 and histidine 188.

It depends on Zn(2+) as a cofactor.

It is found in the zymogen granule. The catalysed reaction is Hydrolysis of the inner layer of fish egg envelope. Also hydrolysis of casein and small molecule substrates such as succinyl-Leu-Leu-Val-Tyr-|-7-(4-methyl)coumarylamide.. In terms of biological role, participates in the breakdown of the egg envelope, which is derived from the egg extracellular matrix, at the time of hatching. Thus allowing the newly hatched fish to swim free. HCE binds tightly to the egg envelope while it exerts the choriolytic swelling action. The polypeptide is High choriolytic enzyme 2 (hceb) (Oryzias latipes (Japanese rice fish)).